The chain runs to 1182 residues: Rho GTPase-activating protein 20 (1182 aa).

Positions 1–40 (MEAMSPQQDALGAQPGRSSSLTGMSRIAGGPGTKKKMKTL) are disordered. Ser46 is subject to Phosphoserine. Residues 86–187 (LLIDGPVELK…SLLQRYIALE (102 aa)) enclose the PH domain. The Ras-associating domain occupies 194–283 (KSIPLKIFAK…TALLTQGSKD (90 aa)). Positions 365–551 (VSLPDICEND…FLIENCCRIF (187 aa)) constitute a Rho-GAP domain. Phosphoserine is present on residues Ser704 and Ser730. Disordered regions lie at residues 744–791 (KQTQ…IQET), 932–953 (ASYSSLSSPGTSPSGSSVSSQD), 981–1009 (QRKQEELSSDCDSPSLVSGMPGPSTGQAS), and 1140–1182 (EESG…GDRH). Residues 757-775 (FKQSSVTGTDVSKRNTANE) show a composition bias toward polar residues. The span at 933 to 953 (SYSSLSSPGTSPSGSSVSSQD) shows a compositional bias: low complexity.

As to expression, highest expression is found in testis. Ubiquitously expressed in extragonadal tissues.

In terms of biological role, GTPase activator for the Rho-type GTPases by converting them to an inactive GDP-bound state. This is Rho GTPase-activating protein 20 (Arhgap20) from Rattus norvegicus (Rat).